We begin with the raw amino-acid sequence, 435 residues long: Ribulose bisphosphate carboxylase-like protein (435 aa).

The Mg(2+) site is built by Lys198, Asp200, and Glu201. At Lys198 the chain carries N6-carboxylysine.

The protein belongs to the RuBisCO large chain family. Type IV subfamily. Homodimer. Mg(2+) serves as cofactor.

In terms of biological role, may be involved in sulfur metabolism and oxidative stress response. Does not show RuBisCO activity. The polypeptide is Ribulose bisphosphate carboxylase-like protein (Chlorobaculum tepidum (strain ATCC 49652 / DSM 12025 / NBRC 103806 / TLS) (Chlorobium tepidum)).